Here is a 63-residue protein sequence, read N- to C-terminus: Progonadoliberin-1 (63 aa).

Gln1 is modified (pyrrolidone carboxylic acid). Glycine amide is present on Gly10.

Belongs to the GnRH family. The precursor is cleaved by ACE, which removes the Gly-Lys-Arg peptide at the C-terminus, leading to mature hormone. The mature form of Gonadoliberin-1 is also cleaved and degraded by ACE.

It localises to the secreted. Stimulates the secretion of gonadotropins; it stimulates the secretion of both luteinizing and follicle-stimulating hormones. The protein is Progonadoliberin-1 (GNRH1) of Mesocricetus auratus (Golden hamster).